A 1059-amino-acid polypeptide reads, in one-letter code: Carbamoyl phosphate synthase large chain (1059 aa).

A carboxyphosphate synthetic domain region spans residues 1–401; it reads MPKRKDIQKV…AMLKAVRSLE (401 aa). 12 residues coordinate ATP: Arg-129, Arg-169, Gly-175, Gly-176, Arg-208, Ile-210, Glu-215, Gly-241, Val-242, His-243, Gln-284, and Glu-298. In terms of domain architecture, ATP-grasp 1 spans 133-327; the sequence is KALMERLNEP…IAKMAAKIAV (195 aa). Mg(2+) contacts are provided by Gln-284, Glu-298, and Asn-300. Mn(2+) contacts are provided by Gln-284, Glu-298, and Asn-300. Residues 402–546 are oligomerization domain; the sequence is IGVTGLNDLT…YATYERENES (145 aa). The interval 547 to 929 is carbamoyl phosphate synthetic domain; sequence VRSKKPSVIV…ALYKAFVASN (383 aa). Residues 671–861 enclose the ATP-grasp 2 domain; the sequence is DQVIKTLALP…LAQLATRVML (191 aa). Positions 707, 746, 748, 752, 777, 778, 779, 780, 820, and 832 each coordinate ATP. Residues Gln-820, Glu-832, and Asn-834 each coordinate Mg(2+). 3 residues coordinate Mn(2+): Gln-820, Glu-832, and Asn-834. One can recognise an MGS-like domain in the interval 930-1059; it reads IKVPQYGNVL…SRSFTVNEMK (130 aa). The tract at residues 930-1059 is allosteric domain; sequence IKVPQYGNVL…SRSFTVNEMK (130 aa).

This sequence belongs to the CarB family. In terms of assembly, composed of two chains; the small (or glutamine) chain promotes the hydrolysis of glutamine to ammonia, which is used by the large (or ammonia) chain to synthesize carbamoyl phosphate. Tetramer of heterodimers (alpha,beta)4. Requires Mg(2+) as cofactor. Mn(2+) is required as a cofactor.

It catalyses the reaction hydrogencarbonate + L-glutamine + 2 ATP + H2O = carbamoyl phosphate + L-glutamate + 2 ADP + phosphate + 2 H(+). The enzyme catalyses hydrogencarbonate + NH4(+) + 2 ATP = carbamoyl phosphate + 2 ADP + phosphate + 2 H(+). It functions in the pathway amino-acid biosynthesis; L-arginine biosynthesis; carbamoyl phosphate from bicarbonate: step 1/1. It participates in pyrimidine metabolism; UMP biosynthesis via de novo pathway; (S)-dihydroorotate from bicarbonate: step 1/3. In terms of biological role, large subunit of the glutamine-dependent carbamoyl phosphate synthetase (CPSase). CPSase catalyzes the formation of carbamoyl phosphate from the ammonia moiety of glutamine, carbonate, and phosphate donated by ATP, constituting the first step of 2 biosynthetic pathways, one leading to arginine and/or urea and the other to pyrimidine nucleotides. The large subunit (synthetase) binds the substrates ammonia (free or transferred from glutamine from the small subunit), hydrogencarbonate and ATP and carries out an ATP-coupled ligase reaction, activating hydrogencarbonate by forming carboxy phosphate which reacts with ammonia to form carbamoyl phosphate. In Leuconostoc citreum (strain KM20), this protein is Carbamoyl phosphate synthase large chain.